Here is a 375-residue protein sequence, read N- to C-terminus: Trans-enoyl reductase BOA5 (375 aa).

The span at 1 to 16 shows a compositional bias: polar residues; the sequence is MQAVIQTGPGTLQLTE. The interval 1 to 21 is disordered; that stretch reads MQAVIQTGPGTLQLTENVPKP. 42–45 is a binding site for NADP(+); it reads SDWK. A substrate-binding site is contributed by 121–128; that stretch reads VGIVTTGL. A disordered region spans residues 147-168; sequence GSAAPQKTRVGPRGWSGGDALT. NADP(+) contacts are provided by residues 185–188, 208–211, Tyr226, and 273–274; these read STST, SPHN, and LD. Position 294–298 (294–298) interacts with substrate; the sequence is ALTIF. Residue 363 to 364 participates in NADP(+) binding; sequence VS.

Belongs to the zinc-containing alcohol dehydrogenase family. Monomer.

It participates in polyketide biosynthesis. Functionally, trans-enoyl reductase; part of the gene cluster A that mediates the biosynthesis of botcinic acid and its botcinin derivatives, acetate-derived polyketides that contribute to virulence when combined with the sesquiterpene botrydial. Botcinic acid and its derivatives have been shown to induce chlorosis and necrosis during host plant infection, but also have antifungal activities. Two polyketide synthases, BOA6 and BOA9, are involved in the biosynthesis of botcinins. BOA6 mediates the formation of the per-methylated tetraketide core by condensation of four units of malonyl-CoA with one unit of acetyl-CoA, which would be methylated in activated methylene groups to yield a bicyclic acid intermediate that could then either be converted to botrylactone derivatives or lose the starter acetate unit through a retro-Claisen type C-C bond cleavage to yield botcinin derivatives. The second polyketide synthase, BOA9, is probably required for the biosynthesis of the tetraketide side chain of botcinins. The methyltransferase (MT) domain within BOA6 is probably responsible for the incorporation of four methyl groups. The trans-enoyl reductase BOA5 might take over the enoyl reductase function of BOA6 that misses an ER domain. The monooxygenases BOA2, BOA3 and BOA4 might be involved in further hydroxylations at C4, C5 and C8, whereas BOA7, close to BOA9, could potentially be involved in the hydroxylation at C4 in the side chain of botcinins. The polypeptide is Trans-enoyl reductase BOA5 (Botryotinia fuckeliana (strain B05.10) (Noble rot fungus)).